The chain runs to 110 residues: UPF0473 protein SSP1146 (110 aa).

The protein belongs to the UPF0473 family.

The polypeptide is UPF0473 protein SSP1146 (Staphylococcus saprophyticus subsp. saprophyticus (strain ATCC 15305 / DSM 20229 / NCIMB 8711 / NCTC 7292 / S-41)).